The primary structure comprises 428 residues: Glutamyl-tRNA reductase (428 aa).

Substrate is bound by residues 49–52 (TCNR), serine 107, 112–114 (EPQ), and glutamine 118. Catalysis depends on cysteine 50, which acts as the Nucleophile. 187–192 (GAGETI) provides a ligand contact to NADP(+).

Belongs to the glutamyl-tRNA reductase family. As to quaternary structure, homodimer.

The catalysed reaction is (S)-4-amino-5-oxopentanoate + tRNA(Glu) + NADP(+) = L-glutamyl-tRNA(Glu) + NADPH + H(+). Its pathway is porphyrin-containing compound metabolism; protoporphyrin-IX biosynthesis; 5-aminolevulinate from L-glutamyl-tRNA(Glu): step 1/2. In terms of biological role, catalyzes the NADPH-dependent reduction of glutamyl-tRNA(Glu) to glutamate 1-semialdehyde (GSA). The sequence is that of Glutamyl-tRNA reductase from Pseudomonas fluorescens (strain Pf0-1).